A 364-amino-acid chain; its full sequence is Putative [LysW]-aminoadipate semialdehyde/glutamate semialdehyde transaminase (364 aa).

Pyridoxal 5'-phosphate-binding positions include 90 to 91 (GT) and phenylalanine 117. A substrate-binding site is contributed by arginine 120. 202–205 (DEVQ) lines the pyridoxal 5'-phosphate pocket. Lysine 230 is subject to N6-(pyridoxal phosphate)lysine. Serine 254 is a substrate binding site. Threonine 255 serves as a coordination point for pyridoxal 5'-phosphate.

This sequence belongs to the class-III pyridoxal-phosphate-dependent aminotransferase family. LysJ subfamily. As to quaternary structure, homodimer. It depends on pyridoxal 5'-phosphate as a cofactor.

It is found in the cytoplasm. The enzyme catalyses [amino-group carrier protein]-C-terminal-gamma-(L-lysyl)-L-glutamate + 2-oxoglutarate = [amino-group carrier protein]-C-terminal-N-(1-carboxy-5-oxopentan-1-yl)-L-glutamine + L-glutamate. It catalyses the reaction [amino-group carrier protein]-C-terminal-gamma-(L-ornithyl)-L-glutamate + 2-oxoglutarate = [amino-group carrier protein]-C-terminal-gamma-(L-glutamyl-5-semialdehyde)-L-glutamate + L-glutamate. The protein operates within amino-acid biosynthesis; L-lysine biosynthesis via AAA pathway; L-lysine from L-alpha-aminoadipate (Thermus route): step 4/5. Its pathway is amino-acid biosynthesis; L-arginine biosynthesis. Functionally, involved in both the arginine and lysine biosynthetic pathways. The protein is Putative [LysW]-aminoadipate semialdehyde/glutamate semialdehyde transaminase of Pyrococcus abyssi (strain GE5 / Orsay).